The sequence spans 1009 residues: Protein translocase subunit SecA (1009 aa).

Residues Q86, 104 to 108, and D497 contribute to the ATP site; that span reads GEGKT. 2 disordered regions span residues 869–894 and 949–1009; these read AVPQ…GQQP and ERRP…RNAG. Low complexity-rich tracts occupy residues 883 to 894 and 953 to 973; these read PVPAATAPGQQP and SGAA…AGAG. The Zn(2+) site is built by C990, C992, C1001, and H1002.

Belongs to the SecA family. In terms of assembly, monomer and homodimer. Part of the essential Sec protein translocation apparatus which comprises SecA, SecYEG and auxiliary proteins SecDF. Other proteins may also be involved. Zn(2+) is required as a cofactor.

The protein localises to the cell membrane. The protein resides in the cytoplasm. It catalyses the reaction ATP + H2O + cellular proteinSide 1 = ADP + phosphate + cellular proteinSide 2.. Its function is as follows. Part of the Sec protein translocase complex. Interacts with the SecYEG preprotein conducting channel. Has a central role in coupling the hydrolysis of ATP to the transfer of proteins into and across the cell membrane, serving as an ATP-driven molecular motor driving the stepwise translocation of polypeptide chains across the membrane. The sequence is that of Protein translocase subunit SecA from Acidothermus cellulolyticus (strain ATCC 43068 / DSM 8971 / 11B).